The primary structure comprises 390 residues: F-box/kelch-repeat protein At3g06570 (390 aa).

An F-box domain is found at 23–69; it reads SASFQSLPDDLILSIVARVPRLYHRTVSLVCKSFRSLLVSPELYKAR. Kelch repeat units lie at residues 140–183, 185–234, and 236–281; these read DIYN…VLDR, IFVV…CRTA, and IDGK…QIHN.

The polypeptide is F-box/kelch-repeat protein At3g06570 (Arabidopsis thaliana (Mouse-ear cress)).